The primary structure comprises 97 residues: Plasmid stability protein StbC (97 aa).

In terms of biological role, involved in plasmid stability. The protein is Plasmid stability protein StbC (stbC) of Pseudomonas syringae pv. tomato (strain ATCC BAA-871 / DC3000).